A 208-amino-acid chain; its full sequence is Large ribosomal subunit protein bL25 (208 aa).

A compositionally biased stretch (acidic residues) spans 185-195; the sequence is DLEEETGEAEG. Residues 185–208 are disordered; that stretch reads DLEEETGEAEGETAAAPAEEGAES. Over residues 196–208 the composition is skewed to low complexity; sequence ETAAAPAEEGAES.

The protein belongs to the bacterial ribosomal protein bL25 family. CTC subfamily. Part of the 50S ribosomal subunit; part of the 5S rRNA/L5/L18/L25 subcomplex. Contacts the 5S rRNA. Binds to the 5S rRNA independently of L5 and L18.

Its function is as follows. This is one of the proteins that binds to the 5S RNA in the ribosome where it forms part of the central protuberance. This is Large ribosomal subunit protein bL25 from Rhodococcus opacus (strain B4).